The following is a 120-amino-acid chain: Ribosome-binding factor A (120 aa).

It belongs to the RbfA family. Monomer. Binds 30S ribosomal subunits, but not 50S ribosomal subunits or 70S ribosomes.

The protein resides in the cytoplasm. One of several proteins that assist in the late maturation steps of the functional core of the 30S ribosomal subunit. Associates with free 30S ribosomal subunits (but not with 30S subunits that are part of 70S ribosomes or polysomes). Required for efficient processing of 16S rRNA. May interact with the 5'-terminal helix region of 16S rRNA. The protein is Ribosome-binding factor A of Limosilactobacillus fermentum (strain NBRC 3956 / LMG 18251) (Lactobacillus fermentum).